The chain runs to 579 residues: MTSVAEGLFKSLPKPKYTGEDEEVPQHAQPRGPRIVGADQIDQSQIVLRRTGPPPYGNRAGWRPRAAEDFGDGGAFPEILVAQYPLDMGRKGTATTSNALAVQVDAEGKVKYDAIARRGHSENRIVHASFKDLIPLRQRVDMGEISLDRPSEEEVQAQMEKTKNALASLVEGAVAAQKPKNVKGGRRAEPTFVRYTPANQMGDTTRKNDRIMKIVERQQDPMEPPKFKHKKIPRGPPSPPPPIMHSPPRKLTAEDQEAWRIPPPVSNWKNPKGYTVPLDKRLAADGRGLQDVTINDKFAQFAEALFTADRHAREEVRLRAQMQQKLAEKEKAQKEEHLRALAQKAREERAASNRRDSRARSHTRSASRSPSAYSRSATPSDDEEAARERERIRRERRQDAERQLRQSRMGTERRIQMMAREQNRDISEKVALGLAKPTQTSESMWDSRLFNQTSGLQSGFNEDNPYDKPLFAAQDAINSIYRPRAQLDVDDEEGAEGEMSKIQKTNRFEVLGKAKEGFRGAAEAEARDGPVQFEKDTTDPFGIDSMIADVTGGAGQKRYGIQEVEREDRGSKRARVDDD.

Disordered regions lie at residues 1 to 64, 218 to 254, 343 to 414, and 521 to 579; these read MTSV…GWRP, QQDPMEPPKFKHKKIPRGPPSPPPPIMHSPPRKLTAE, QKAR…TERR, and AAEA…VDDD. The span at 234–245 shows a compositional bias: pro residues; the sequence is RGPPSPPPPIMH. A compositionally biased stretch (basic and acidic residues) spans 343–359; it reads QKAREERAASNRRDSRA. Positions 366-379 are enriched in low complexity; the sequence is ASRSPSAYSRSATP. 3 stretches are compositionally biased toward basic and acidic residues: residues 386–414, 521–538, and 563–579; these read ARERERIRRERRQDAERQLRQSRMGTERR, AAEAEARDGPVQFEKDTT, and EVEREDRGSKRARVDDD.

Belongs to the SNW family. In terms of assembly, associated with the spliceosome.

Its subcellular location is the nucleus. Functionally, involved in pre-mRNA splicing. The protein is Pre-mRNA-processing protein 45 (prp45) of Aspergillus fumigatus (strain ATCC MYA-4609 / CBS 101355 / FGSC A1100 / Af293) (Neosartorya fumigata).